We begin with the raw amino-acid sequence, 274 residues long: MDAEIFSLDSLSIYKDINIASAKPSLKERKNIKHYALDHLNIDEKNNAQLFKTLLEDAMRVSSKEILLIVGGSSFYLKSILEGLSDTPKISGEEVVKIEREISALANPYAFLKSIDPTIAFKIHPNDTYRIHKALEIFYLTHMPPSEYFKANPKKPFEHAISLFALHIEKNALHNNIKQRTKNMLHSGLVEEIKALYAKYPKDSQPFKAIGVKESVLFLEKQLTLKELEGAITFNPIKLAKRQNTFNKTQFNILYTGSVKEVRHAILKHSKSAY.

The segment at 9 to 12 is interaction with substrate tRNA; it reads DSLS.

The protein belongs to the IPP transferase family. Monomer. Mg(2+) is required as a cofactor.

The catalysed reaction is adenosine(37) in tRNA + dimethylallyl diphosphate = N(6)-dimethylallyladenosine(37) in tRNA + diphosphate. In terms of biological role, catalyzes the transfer of a dimethylallyl group onto the adenine at position 37 in tRNAs that read codons beginning with uridine, leading to the formation of N6-(dimethylallyl)adenosine (i(6)A). This is tRNA dimethylallyltransferase (miaA) from Helicobacter pylori (strain P12).